A 206-amino-acid chain; its full sequence is Max dimerization protein 3 (206 aa).

The interaction with SIN3A and SIN3B stretch occupies residues 8–25 (IQVLLQAAEFLERREREA). Disordered regions lie at residues 25–67 (AEHG…ELEK) and 146–171 (RERL…QEEL). In terms of domain architecture, bHLH spans 57–109 (SGRSVHNELEKRRRAQLKRCLERLKQQMPLGADCARYTTLSLLRRARMHIQKL).

As to quaternary structure, efficient DNA binding requires dimerization with another bHLH protein. Binds DNA as a heterodimer with MAX. Interacts with SIN3A AND SIN3B. Interacts with RNF17.

It is found in the nucleus. In terms of biological role, transcriptional repressor. Binds with MAX to form a sequence-specific DNA-binding protein complex which recognizes the core sequence 5'-CAC[GA]TG-3'. Antagonizes MYC transcriptional activity by competing for MAX and suppresses MYC dependent cell transformation. The protein is Max dimerization protein 3 (MXD3) of Homo sapiens (Human).